Here is a 673-residue protein sequence, read N- to C-terminus: Annexin A6 (673 aa).

Alanine 2 bears the N-acetylalanine mark. Serine 13 is modified (phosphoserine). Annexin repeat units lie at residues 20 to 91 (FDAN…NLMR), 92 to 163 (PLAY…VLLQ), 175 to 247 (DLVQ…AVVK), 251 to 322 (STPE…KLCG), 363 to 434 (FNPD…GLMM), 435 to 506 (PPAH…SLAT), 521 to 595 (EDAQ…AIVQ), and 599 to 670 (NKPL…ALCG). Position 30 is a phosphotyrosine (tyrosine 30). 4 positions are modified to N6-acetyllysine: lysine 63, lysine 68, lysine 75, and lysine 81. The residue at position 201 (tyrosine 201) is a Phosphotyrosine. N6-acetyllysine occurs at positions 306, 370, and 418. Residue serine 422 is modified to Phosphoserine. An N6-acetyllysine modification is found at lysine 483. Serine 537 carries the post-translational modification Phosphoserine. Residue lysine 620 is modified to N6-acetyllysine.

This sequence belongs to the annexin family.

The protein resides in the cytoplasm. It is found in the melanosome. May associate with CD21. May regulate the release of Ca(2+) from intracellular stores. The polypeptide is Annexin A6 (Anxa6) (Rattus norvegicus (Rat)).